We begin with the raw amino-acid sequence, 92 residues long: MKTQVLVVLVLCVVFCLAESRNSMTSEERGLVSLMRQRDDIAKRLQCKCKGDAPDLSHMSGTIYFSCEGGDNSWKKCNSISVFADCCHKKPT.

Positions 1–20 are cleaved as a signal peptide; it reads MKTQVLVVLVLCVVFCLAES. A propeptide spanning residues 21 to 42 is cleaved from the precursor; it reads RNSMTSEERGLVSLMRQRDDIA. 3 cysteine pairs are disulfide-bonded: Cys47/Cys86, Cys49/Cys77, and Cys67/Cys87.

This sequence belongs to the sea anemone sodium channel inhibitory toxin family. As to expression, expressed both outside and in acontia, a specialised envenomation structure laden with batteries of venom-containing nematocysts found only in the superfamily Metridioidea.

Its subcellular location is the secreted. The protein localises to the nematocyst. Its function is as follows. In neuromuscular preparation of crustaceans, the toxin increased neurotransmitter release, causing repetitive firing of the axons. May affect sodium channels (Nav). The polypeptide is Calitoxin (Calliactis polypus (Hermit crab anemone)).